The chain runs to 202 residues: Hydrogenase expression/formation protein HupD (202 aa).

Ni(2+) is bound by residues Glu-28, Asp-74, and His-105.

Belongs to the peptidase A31 family.

Functionally, not known. Could be involved in the processing of hydrogenase. The sequence is that of Hydrogenase expression/formation protein HupD (hupD) from Rhizobium leguminosarum bv. viciae.